The following is a 190-amino-acid chain: Putative phosphatidylethanolamine-binding protein (190 aa).

The protein belongs to the phosphatidylethanolamine-binding protein family.

This Plasmodium falciparum protein is Putative phosphatidylethanolamine-binding protein.